Reading from the N-terminus, the 235-residue chain is Rab-like protein 3 (235 aa).

Residues 1-235 (MASLDRVKVL…GGNFKSLHYD (235 aa)) form a small GTPase-like region. Residues 16–21 (GVGKSS), 148–150 (KLD), and 179–180 (DC) contribute to the GTP site.

It belongs to the small GTPase superfamily. Rab family. As to quaternary structure, homodimer.

In terms of biological role, required for KRAS signaling regulation and modulation of cell proliferation. Regulator of KRAS prenylation, and probably prenylation of other small GTPases. Required for lymphocyte development and function. Not required for myeloid cell development. This chain is Rab-like protein 3 (rabl3), found in Xenopus tropicalis (Western clawed frog).